The primary structure comprises 295 residues: Acetylglutamate kinase (295 aa).

Substrate contacts are provided by residues 67 to 68 (GG), Arg-89, and Asn-191.

The protein belongs to the acetylglutamate kinase family. ArgB subfamily.

The protein resides in the cytoplasm. The catalysed reaction is N-acetyl-L-glutamate + ATP = N-acetyl-L-glutamyl 5-phosphate + ADP. It functions in the pathway amino-acid biosynthesis; L-arginine biosynthesis; N(2)-acetyl-L-ornithine from L-glutamate: step 2/4. Functionally, catalyzes the ATP-dependent phosphorylation of N-acetyl-L-glutamate. The polypeptide is Acetylglutamate kinase (Nitrosomonas eutropha (strain DSM 101675 / C91 / Nm57)).